The chain runs to 59 residues: Zinc finger protein HVO_2753 (59 aa).

4 short sequence motifs (c(P)XCG motif) span residues 12–16, 29–33, 39–43, and 51–55; these read CVSCG, CPDCG, and CSKCR. 2 residues coordinate Zn(2+): Cys29 and Cys32. Zn(2+) is bound by residues Cys51 and Cys54.

Monomer in solution.

In terms of biological role, zinc-binding protein that binds only one zinc ion. Is required for swarming and biofilm formation. This Haloferax volcanii (strain ATCC 29605 / DSM 3757 / JCM 8879 / NBRC 14742 / NCIMB 2012 / VKM B-1768 / DS2) (Halobacterium volcanii) protein is Zinc finger protein HVO_2753.